The sequence spans 641 residues: Probable potassium transport system protein Kup (641 aa).

A run of 12 helical transmembrane segments spans residues 29–49 (ISLA…LYAI), 66–86 (ILGV…LKYL), 119–139 (WVLV…AMIT), 156–176 (PAFA…LFLF), 185–205 (GALF…LGII), 231–251 (LHGF…EALY), 266–286 (WVLF…AFLL), 298–318 (ALVP…ATVI), 356–376 (IYVP…VLGF), 384–404 (AAYG…FFFV), 415–435 (VLWA…GASM), and 438–458 (LFHG…LMNT).

This sequence belongs to the HAK/KUP transporter (TC 2.A.72) family.

The protein localises to the cell inner membrane. The catalysed reaction is K(+)(in) + H(+)(in) = K(+)(out) + H(+)(out). Transport of potassium into the cell. Likely operates as a K(+):H(+) symporter. The chain is Probable potassium transport system protein Kup from Chlorobium phaeovibrioides (strain DSM 265 / 1930) (Prosthecochloris vibrioformis (strain DSM 265)).